The primary structure comprises 20 residues: Fibrinogen beta chain (20 aa).

Positions 1 to 20 (ATDYEDEEFPGAVPPSVGAR) are disordered. An O-linked (GalNAc...) threonine glycan is attached at Thr-2. Tyr-4 is subject to Sulfotyrosine.

In terms of assembly, heterohexamer; disulfide linked. Contains 2 sets of 3 non-identical chains (alpha, beta and gamma). The 2 heterotrimers are in head to head conformation with the N-termini in a small central domain. Conversion of fibrinogen to fibrin is triggered by thrombin, which cleaves fibrinopeptides A and B from alpha and beta chains, and thus exposes the N-terminal polymerization sites responsible for the formation of the soft clot.

It is found in the secreted. Its function is as follows. Cleaved by the protease thrombin to yield monomers which, together with fibrinogen alpha (FGA) and fibrinogen gamma (FGG), polymerize to form an insoluble fibrin matrix. Fibrin has a major function in hemostasis as one of the primary components of blood clots. In addition, functions during the early stages of wound repair to stabilize the lesion and guide cell migration during re-epithelialization. Was originally thought to be essential for platelet aggregation, based on in vitro studies using anticoagulated blood. However subsequent studies have shown that it is not absolutely required for thrombus formation in vivo. Enhances expression of SELP in activated platelets. Maternal fibrinogen is essential for successful pregnancy. Fibrin deposition is also associated with infection, where it protects against IFNG-mediated hemorrhage. May also facilitate the antibacterial immune response via both innate and T-cell mediated pathways. In Elephas maximus (Indian elephant), this protein is Fibrinogen beta chain (FGB).